The sequence spans 201 residues: Superoxide dismutase [Mn] (201 aa).

4 residues coordinate Mn(2+): His27, His81, Asp163, and His167.

It belongs to the iron/manganese superoxide dismutase family. In terms of assembly, homodimer. Mn(2+) is required as a cofactor.

It localises to the secreted. It catalyses the reaction 2 superoxide + 2 H(+) = H2O2 + O2. Its function is as follows. Destroys superoxide anion radicals which are normally produced within the cells and which are toxic to biological systems. The polypeptide is Superoxide dismutase [Mn] (sodA) (Streptococcus pyogenes serotype M1).